The following is a 414-amino-acid chain: Tyrosine--tRNA ligase (414 aa).

Tyrosine 38 is an L-tyrosine binding site. Positions 43 to 52 (PTATSLHLGN) match the 'HIGH' region motif. L-tyrosine contacts are provided by tyrosine 165 and glutamine 169. The short motif at 228-232 (KFGKS) is the 'KMSKS' region element. Residue lysine 231 participates in ATP binding. Positions 349 to 414 (FNANQIIDLG…KKYFFIIELI (66 aa)) constitute an S4 RNA-binding domain.

It belongs to the class-I aminoacyl-tRNA synthetase family. TyrS type 1 subfamily. Homodimer.

It localises to the cytoplasm. The catalysed reaction is tRNA(Tyr) + L-tyrosine + ATP = L-tyrosyl-tRNA(Tyr) + AMP + diphosphate + H(+). Its function is as follows. Catalyzes the attachment of tyrosine to tRNA(Tyr) in a two-step reaction: tyrosine is first activated by ATP to form Tyr-AMP and then transferred to the acceptor end of tRNA(Tyr). This is Tyrosine--tRNA ligase from Mesomycoplasma hyopneumoniae (strain 232) (Mycoplasma hyopneumoniae).